Reading from the N-terminus, the 840-residue chain is OTU domain-containing protein 7B (840 aa).

A disordered region spans residues 49 to 88 (AGNLSPPFSGGSTCPKTPEKGGSDREPTRPSRPILQRQDD). A compositionally biased stretch (basic and acidic residues) spans 65–77 (TPEKGGSDREPTR). Residue Ser100 is modified to Phosphoserine. The segment at 152 to 401 (ERDLIEQSML…AVDPGKGWEW (250 aa)) is TRAF-binding. Residues 167–440 (AGRLNWWVSM…VKWIPLSSDS (274 aa)) form a catalytic region. The OTU domain maps to 183 to 365 (LLPLATTGDG…QAHFSALVSM (183 aa)). Residues 187–193 (ATTGDGN) are regulatory loop. Residue Asp191 is part of the active site. Cys194 functions as the Nucleophile in the catalytic mechanism. His358 acts as the Proton acceptor in catalysis. The segment covering 440 to 452 (SQAPLAQPESPTA) has biased composition (polar residues). Disordered regions lie at residues 440-592 (SQAP…YSQE) and 653-710 (IMNG…VHCQ). Basic and acidic residues-rich tracts occupy residues 456–471 (DEPRSTPESGESDKES) and 488–500 (SKRDREKDKKRAD). A phosphoserine mark is found at Ser464, Ser467, and Ser471. Residues 483–498 (RRKEKSKRDREKDKKR) carry the Nuclear localization signal motif. The segment covering 531–541 (KPGGLGSGSGI) has biased composition (gly residues). Thr730 is modified (phosphothreonine). The A20-type zinc finger occupies 793–828 (PPTQTKCKQPNCSFYGHPETNNLCSCCYREELRRRE). Residues Cys799, Cys804, Cys816, and Cys819 each contribute to the Zn(2+) site.

It belongs to the peptidase C64 family. Interacts with TRAF6. Interacts with PARK7, leading to inhibit deubiquitinase activity. Interacts with EGFR, ITCH and NEDD4. Interacts with TRAF3. Interacts with ZAP70 in activated T cells, but not in resting T cells. In terms of processing, phosphorylated by EGFR.

It is found in the cytoplasm. The protein resides in the nucleus. It catalyses the reaction Thiol-dependent hydrolysis of ester, thioester, amide, peptide and isopeptide bonds formed by the C-terminal Gly of ubiquitin (a 76-residue protein attached to proteins as an intracellular targeting signal).. Its activity is regulated as follows. Deubiquitinase activity is inhibited following interaction with PARK7. Negative regulator of the non-canonical NF-kappa-B pathway that acts by mediating deubiquitination of TRAF3, an inhibitor of the NF-kappa-B pathway, thereby acting as a negative regulator of B-cell responses. In response to non-canonical NF-kappa-B stimuli, deubiquitinates 'Lys-48'-linked polyubiquitin chains of TRAF3, preventing TRAF3 proteolysis and over-activation of non-canonical NF-kappa-B. Negatively regulates mucosal immunity against infections. Deubiquitinates ZAP70, and thereby regulates T cell receptor (TCR) signaling that leads to the activation of NF-kappa-B. Plays a role in T cell homeostasis and is required for normal T cell responses, including production of IFNG and IL2. Mediates deubiquitination of EGFR. Has deubiquitinating activity toward 'Lys-11', 'Lys-48' and 'Lys-63'-linked polyubiquitin chains. Has a much higher catalytic rate with 'Lys-11'-linked polyubiquitin chains (in vitro); however the physiological significance of these data are unsure. Hydrolyzes both linear and branched forms of polyubiquitin. Acts as a regulator of mTORC1 and mTORC2 assembly by mediating 'Lys-63'-linked deubiquitination of MLST8, thereby promoting assembly of the mTORC2 complex, while inibiting formation of the mTORC1 complex. The polypeptide is OTU domain-containing protein 7B (Otud7b) (Mus musculus (Mouse)).